Consider the following 87-residue polypeptide: Beta-toxin Cn4 (87 aa).

The signal sequence occupies residues 1 to 19 (MNSLLMITACLALVGTVWA). The LCN-type CS-alpha/beta domain maps to 20–85 (KEGYLVNSYT…VWPLKNKTCN (66 aa)). 4 disulfide bridges follow: Cys31-Cys84, Cys35-Cys60, Cys44-Cys65, and Cys48-Cys67. The residue at position 85 (Asn85) is an Asparagine amide.

The protein belongs to the long (4 C-C) scorpion toxin superfamily. Sodium channel inhibitor family. Beta subfamily. In terms of tissue distribution, expressed by the venom gland.

It is found in the secreted. In terms of biological role, beta toxins bind voltage-independently at site-4 of sodium channels (Nav) and shift the voltage of activation toward more negative potentials thereby affecting sodium channel activation and promoting spontaneous and repetitive firing. This toxin affects the activation mechanism of sodium channels of squid axon. It also competes with Cn2 in rat brain synaptosomes. Is lethal to mice. This Centruroides noxius (Mexican scorpion) protein is Beta-toxin Cn4.